The primary structure comprises 473 residues: Mediator of RNA polymerase II transcription subunit 29 (473 aa).

The span at 1–12 (MSGQGPPSNLTP) shows a compositional bias: polar residues. Disordered regions lie at residues 1 to 319 (MSGQ…NEEQ) and 444 to 473 (STME…EMAE). The span at 13–50 (QQQHMIMQQQQQQQMMRQQQIQQQQLHQRQLQQQQAQQ) shows a compositional bias: low complexity. The span at 51–62 (SYQRSRTPQMQQ) shows a compositional bias: polar residues. Low complexity-rich tracts occupy residues 111 to 123 (QMMQ…NQPM) and 130 to 139 (VSRPGSVAPP). Polar residues-rich tracts occupy residues 148–183 (TGPS…QQSH) and 255–269 (PPGS…QPGS). 2 stretches are compositionally biased toward low complexity: residues 272 to 286 (APGS…QPPA) and 294 to 308 (AASG…AAPA).

It belongs to the Mediator complex subunit 29 family. Component of the Mediator complex.

It localises to the nucleus. Its function is as follows. Component of the Mediator complex, a coactivator involved in the regulated transcription of nearly all RNA polymerase II-dependent genes. Mediator functions as a bridge to convey information from gene-specific regulatory proteins to the basal RNA polymerase II transcription machinery. Mediator is recruited to promoters by direct interactions with regulatory proteins and serves as a scaffold for the assembly of a functional preinitiation complex with RNA polymerase II and the general transcription factors. The sequence is that of Mediator of RNA polymerase II transcription subunit 29 (mdt-29) from Caenorhabditis briggsae.